The chain runs to 664 residues: UvrABC system protein B (664 aa).

In terms of domain architecture, Helicase ATP-binding spans 25 to 182 (KSFGEGKNKI…RKFLHIQYAR (158 aa)). Residue 38–45 (GVTGSGKT) coordinates ATP. The Beta-hairpin signature appears at 91-114 (YYDYYQPEAYVPSSDTFIEKDMSM). Residues 429-595 (QIEDLLNEIR…TIQKEIHDIL (167 aa)) enclose the Helicase C-terminal domain. The UVR domain maps to 625-660 (DKLREALKREMLRYANDMDFEKAAMFRDKMLALGPD).

Belongs to the UvrB family. As to quaternary structure, forms a heterotetramer with UvrA during the search for lesions. Interacts with UvrC in an incision complex.

Its subcellular location is the cytoplasm. The UvrABC repair system catalyzes the recognition and processing of DNA lesions. A damage recognition complex composed of 2 UvrA and 2 UvrB subunits scans DNA for abnormalities. Upon binding of the UvrA(2)B(2) complex to a putative damaged site, the DNA wraps around one UvrB monomer. DNA wrap is dependent on ATP binding by UvrB and probably causes local melting of the DNA helix, facilitating insertion of UvrB beta-hairpin between the DNA strands. Then UvrB probes one DNA strand for the presence of a lesion. If a lesion is found the UvrA subunits dissociate and the UvrB-DNA preincision complex is formed. This complex is subsequently bound by UvrC and the second UvrB is released. If no lesion is found, the DNA wraps around the other UvrB subunit that will check the other stand for damage. This Leptospira biflexa serovar Patoc (strain Patoc 1 / Ames) protein is UvrABC system protein B.